Here is a 355-residue protein sequence, read N- to C-terminus: Anthranilate phosphoribosyltransferase (355 aa).

5-phospho-alpha-D-ribose 1-diphosphate contacts are provided by residues glycine 102, 105 to 106 (GD), serine 110, 112 to 115 (NIST), 130 to 138 (KHGNRSVSS), and serine 142. Glycine 102 is an anthranilate binding site. Serine 114 is a Mg(2+) binding site. Asparagine 133 is a binding site for anthranilate. Arginine 188 is an anthranilate binding site. Residues aspartate 246 and glutamate 247 each contribute to the Mg(2+) site.

The protein belongs to the anthranilate phosphoribosyltransferase family. Homodimer. It depends on Mg(2+) as a cofactor.

It catalyses the reaction N-(5-phospho-beta-D-ribosyl)anthranilate + diphosphate = 5-phospho-alpha-D-ribose 1-diphosphate + anthranilate. It participates in amino-acid biosynthesis; L-tryptophan biosynthesis; L-tryptophan from chorismate: step 2/5. Its function is as follows. Catalyzes the transfer of the phosphoribosyl group of 5-phosphorylribose-1-pyrophosphate (PRPP) to anthranilate to yield N-(5'-phosphoribosyl)-anthranilate (PRA). This chain is Anthranilate phosphoribosyltransferase, found in Pectobacterium atrosepticum (strain SCRI 1043 / ATCC BAA-672) (Erwinia carotovora subsp. atroseptica).